An 86-amino-acid polypeptide reads, in one-letter code: Large ribosomal subunit protein bL31 (86 aa).

The tract at residues 65-86 (YGMASSDSSEQKDKSSEEKKES) is disordered. Over residues 73-86 (SEQKDKSSEEKKES) the composition is skewed to basic and acidic residues.

The protein belongs to the bacterial ribosomal protein bL31 family. Type A subfamily. In terms of assembly, part of the 50S ribosomal subunit.

In terms of biological role, binds the 23S rRNA. In Prochlorococcus marinus (strain NATL2A), this protein is Large ribosomal subunit protein bL31.